The chain runs to 509 residues: Histidine ammonia-lyase (509 aa).

The segment at residues 142–144 is a cross-link (5-imidazolinone (Ala-Gly)); it reads ASG. 2,3-didehydroalanine (Ser) is present on serine 143.

This sequence belongs to the PAL/histidase family. Contains an active site 4-methylidene-imidazol-5-one (MIO), which is formed autocatalytically by cyclization and dehydration of residues Ala-Ser-Gly.

It is found in the cytoplasm. The enzyme catalyses L-histidine = trans-urocanate + NH4(+). It functions in the pathway amino-acid degradation; L-histidine degradation into L-glutamate; N-formimidoyl-L-glutamate from L-histidine: step 1/3. This Pseudomonas aeruginosa (strain UCBPP-PA14) protein is Histidine ammonia-lyase.